A 609-amino-acid chain; its full sequence is Mitochondrial nucleoid-associated protein 1 (609 aa).

The Mitochondrial matrix portion of the chain corresponds to 1–552; sequence MSDNPPRMEV…IRCNTTIRKS (552 aa). 3 disordered regions span residues 142-168, 183-202, and 410-441; these read ASEK…NPSE, SNQD…TTSG, and QLSL…HTPQ. Over residues 146–161 the composition is skewed to basic and acidic residues; it reads TSPKRELAKDLPKSGE. A compositionally biased stretch (polar residues) spans 418–441; sequence DSQFQASHTGCQSPLCSAQRHTPQ. The chain crosses the membrane as a helical span at residues 553–573; that stretch reads GFGGITMLFTGYFVLCCSWSF. Topologically, residues 574-609 are mitochondrial intermembrane; sequence RRLKKLCRPLPWKSTVPPCIGVAKTTGDCRSKTCLD.

Its subcellular location is the mitochondrion inner membrane. It localises to the mitochondrion matrix. The protein localises to the mitochondrion nucleoid. Its function is as follows. Critical regulator of mitochondrial DNA (mtDNA) abundance. Binds dsDNA throughout the mitochondrial genome without sequence specificity and controls mtDNA copy number by promoting its replication. Also plays important roles in mitochondrial metabolism and cell proliferation. This Homo sapiens (Human) protein is Mitochondrial nucleoid-associated protein 1.